A 210-amino-acid polypeptide reads, in one-letter code: Leucyl/phenylalanyl-tRNA--protein transferase (210 aa).

Belongs to the L/F-transferase family.

The protein resides in the cytoplasm. It catalyses the reaction N-terminal L-lysyl-[protein] + L-leucyl-tRNA(Leu) = N-terminal L-leucyl-L-lysyl-[protein] + tRNA(Leu) + H(+). The catalysed reaction is N-terminal L-arginyl-[protein] + L-leucyl-tRNA(Leu) = N-terminal L-leucyl-L-arginyl-[protein] + tRNA(Leu) + H(+). The enzyme catalyses L-phenylalanyl-tRNA(Phe) + an N-terminal L-alpha-aminoacyl-[protein] = an N-terminal L-phenylalanyl-L-alpha-aminoacyl-[protein] + tRNA(Phe). In terms of biological role, functions in the N-end rule pathway of protein degradation where it conjugates Leu, Phe and, less efficiently, Met from aminoacyl-tRNAs to the N-termini of proteins containing an N-terminal arginine or lysine. The polypeptide is Leucyl/phenylalanyl-tRNA--protein transferase (Ruegeria pomeroyi (strain ATCC 700808 / DSM 15171 / DSS-3) (Silicibacter pomeroyi)).